Reading from the N-terminus, the 282-residue chain is Probable metal transport system membrane protein TM_0125 (282 aa).

9 helical membrane-spanning segments follow: residues 33–53, 58–78, 79–99, 109–129, 148–168, 184–204, 210–230, 234–254, and 259–279; these read AFVGGILVASLSGLVSPIVVF, FIGDGTAHAVFAGLAAATLIG, ADHRLIAFATALLFAFAVSLF, AIGILLPFFMAVGVVLFSVSG, STDVAITAVVLALSVILTVVF, FYGIKTDLIRFLITSFIAITV, VVGVILTGALLILPGLVSKIF, FWSLTTISVIFSTGVFFAGFL, and LDLPPGPVIVIIAFVSFLPML.

The protein belongs to the ABC-3 integral membrane protein family.

Its subcellular location is the cell inner membrane. Functionally, part of an ATP-driven transport system TM_0123/TM_0124/TM_0125 for a metal. The sequence is that of Probable metal transport system membrane protein TM_0125 from Thermotoga maritima (strain ATCC 43589 / DSM 3109 / JCM 10099 / NBRC 100826 / MSB8).